The chain runs to 371 residues: 2-aminoethylphosphonate--pyruvate transaminase (371 aa).

Position 195 is an N6-(pyridoxal phosphate)lysine (Lys-195).

It belongs to the class-V pyridoxal-phosphate-dependent aminotransferase family. PhnW subfamily. In terms of assembly, homodimer. Requires pyridoxal 5'-phosphate as cofactor.

It catalyses the reaction (2-aminoethyl)phosphonate + pyruvate = phosphonoacetaldehyde + L-alanine. Its function is as follows. Involved in phosphonate degradation. The polypeptide is 2-aminoethylphosphonate--pyruvate transaminase (Pseudomonas aeruginosa (strain UCBPP-PA14)).